A 342-amino-acid chain; its full sequence is Foldase protein PrsA (342 aa).

The signal sequence occupies residues 1–22 (MVSVKKIVASALVGVLMFSAVG). Residue C23 is the site of N-palmitoyl cysteine attachment. The S-diacylglycerol cysteine moiety is linked to residue C23. The 96-residue stretch at 189 to 284 (DSGVLTKHLL…FGYHIIQAGA (96 aa)) folds into the PpiC domain.

Belongs to the PrsA family.

It localises to the cell membrane. The catalysed reaction is [protein]-peptidylproline (omega=180) = [protein]-peptidylproline (omega=0). Plays a major role in protein secretion by helping the post-translocational extracellular folding of several secreted proteins. In Clostridium perfringens (strain ATCC 13124 / DSM 756 / JCM 1290 / NCIMB 6125 / NCTC 8237 / Type A), this protein is Foldase protein PrsA.